Here is a 583-residue protein sequence, read N- to C-terminus: Lamin-B3 (583 aa).

The disordered stretch occupies residues 1 to 30; sequence MATSTPSRAREHASAAQSPGSPTRISRMQE. The interval 2–32 is head; that stretch reads ATSTPSRAREHASAAQSPGSPTRISRMQEKE. The segment covering 15–26 has biased composition (polar residues); sequence AAQSPGSPTRIS. At Ser-21 the chain carries Phosphoserine. The 357-residue stretch at 30–386 folds into the IF rod domain; it reads EKEDLRHLND…KMLEGEEQRL (357 aa). The coil 1A stretch occupies residues 33–67; the sequence is DLRHLNDRLAAYIERVRSLEADKSLLKIQLEEREE. Residues 68–79 are linker 1; that stretch reads VSSREVTNLRQL. Residues 80 to 215 form a coil 1B region; sequence YETELADARK…QKNIHTQEVK (136 aa). Residues 216–242 are linker 2; it reads EIKKRHDTRIVEIDSGRRVEFESKLAE. Positions 243–384 are coil 2; that stretch reads ALQELRRDHE…YRKMLEGEEQ (142 aa). The segment at 383–431 is disordered; sequence EQRLKLSPSPSQRSTVSRASTSQTSRLLRGKKRKLDETGRSVTKRSYKV. A tail region spans residues 385–580; the sequence is RLKLSPSPSQ…QSHQSVDPSC (196 aa). The span at 390–408 shows a compositional bias: polar residues; sequence PSPSQRSTVSRASTSQTSR. Ser-391 bears the Phosphoserine mark. In terms of domain architecture, LTD spans 429-546; that stretch reads YKVVQQASST…EECAERTLYR (118 aa). Cysteine methyl ester is present on Cys-580. The S-farnesyl cysteine moiety is linked to residue Cys-580. The propeptide at 581–583 is removed in mature form; sequence SIM.

This sequence belongs to the intermediate filament family. Phosphorylation plays a key role in lamin organization, subcellular localization and nuclear envelope disintegration. Phosphorylation by CDK1 at Ser-21 at the onset of mitosis drives lamin disassembly and nuclear envelope breakdown.

It is found in the nucleus lamina. The protein resides in the nucleus envelope. The protein localises to the nucleus. Its subcellular location is the nucleoplasm. It localises to the nucleus matrix. Its function is as follows. Lamins are intermediate filament proteins that assemble into a filamentous meshwork, and which constitute the major components of the nuclear lamina, a fibrous layer on the nucleoplasmic side of the inner nuclear membrane. Lamins provide a framework for the nuclear envelope, bridging the nuclear envelope and chromatin, thereby playing an important role in nuclear assembly, chromatin organization, nuclear membrane and telomere dynamics. The structural integrity of the lamina is strictly controlled by the cell cycle, as seen by the disintegration and formation of the nuclear envelope in prophase and telophase, respectively. The protein is Lamin-B3 (lmnb3.L) of Xenopus laevis (African clawed frog).